A 195-amino-acid chain; its full sequence is Rubrerythrin (195 aa).

The 150-residue stretch at methionine 1 to lysine 150 folds into the Ferritin-like diiron domain. Fe(3+) contacts are provided by glutamate 20, glutamate 53, glutamate 98, glutamate 101, glutamate 132, histidine 135, cysteine 162, cysteine 165, cysteine 178, and cysteine 181. Positions valine 157 to tyrosine 195 constitute a Rubredoxin-like domain.

In terms of assembly, homodimer. Possesses two rubredoxin-like centers and two non-sulfur oxo-bridged di-iron centers per dimer. It depends on Fe(3+) as a cofactor.

The protein localises to the cytoplasm. In terms of biological role, may provide oxidative stress protection via catalytic reduction of intracellular hydrogen peroxide. This chain is Rubrerythrin (rbr), found in Clostridium perfringens (strain 13 / Type A).